We begin with the raw amino-acid sequence, 618 residues long: Zinc finger protein 48 (618 aa).

Met1 carries the N-acetylmethionine modification. Basic and acidic residues-rich tracts occupy residues Met1–Arg22 and Glu39–Phe51. 2 disordered regions span residues Met1–Phe51 and Leu78–Asp109. A Glycyl lysine isopeptide (Lys-Gly) (interchain with G-Cter in SUMO2) cross-link involves residue Lys87. 2 C2H2-type zinc fingers span residues Ala112–His134 and Tyr140–His162. Residues Lys157–Glu189 form a disordered region. Lys179 participates in a covalent cross-link: Glycyl lysine isopeptide (Lys-Gly) (interchain with G-Cter in SUMO2). C2H2-type zinc fingers lie at residues Thr192–His214 and Tyr220–His242. The segment at Arg235–Gln271 is disordered. Lys269 participates in a covalent cross-link: Glycyl lysine isopeptide (Lys-Gly) (interchain with G-Cter in SUMO2). 2 consecutive C2H2-type zinc fingers follow at residues Tyr275–His297 and Phe303–His325. Lys329 participates in a covalent cross-link: Glycyl lysine isopeptide (Lys-Gly) (interchain with G-Cter in SUMO2). 2 consecutive C2H2-type zinc fingers follow at residues Tyr331–His353 and His359–His381. Pro residues predominate over residues Tyr392–Pro414. The segment at Tyr392–Gly457 is disordered. Positions Arg415–Glu432 are enriched in low complexity. A C2H2-type 9 zinc finger spans residues His451–His473. Residue Lys477 forms a Glycyl lysine isopeptide (Lys-Gly) (interchain with G-Cter in SUMO2) linkage. A C2H2-type 10 zinc finger spans residues Tyr479–His501. The disordered stretch occupies residues Thr500 to Ser540. A compositionally biased stretch (pro residues) spans Pro508 to Pro528. 2 C2H2-type zinc fingers span residues His543–His565 and Tyr571–His593. A Glycyl lysine isopeptide (Lys-Gly) (interchain with G-Cter in SUMO2) cross-link involves residue Lys610.

The protein belongs to the krueppel C2H2-type zinc-finger protein family.

Its subcellular location is the nucleus. Its function is as follows. May be involved in transcriptional regulation. The protein is Zinc finger protein 48 (ZNF48) of Homo sapiens (Human).